Consider the following 713-residue polypeptide: BBSome complex assembly protein BBS10 (713 aa).

It belongs to the TCP-1 chaperonin family. Component of a complex composed at least of MKKS, BBS10, BBS12, TCP1, CCT2, CCT3, CCT4, CCT5 and CCT8.

It localises to the cell projection. It is found in the cilium. Functionally, probable molecular chaperone that assists the folding of proteins upon ATP hydrolysis. Plays a role in the assembly of BBSome, a complex involved in ciliogenesis regulating transports vesicles to the cilia. Involved in adipogenic differentiation. This is BBSome complex assembly protein BBS10 (Bbs10) from Mus musculus (Mouse).